Here is a 197-residue protein sequence, read N- to C-terminus: Large ribosomal subunit protein uL13B (197 aa).

At Ser-193 the chain carries Phosphoserine.

It belongs to the universal ribosomal protein uL13 family. As to quaternary structure, component of the large ribosomal subunit (LSU). Mature yeast ribosomes consist of a small (40S) and a large (60S) subunit. The 40S small subunit contains 1 molecule of ribosomal RNA (18S rRNA) and at least 33 different proteins. The large 60S subunit contains 3 rRNA molecules (25S, 5.8S and 5S rRNA) and at least 46 different proteins.

The protein resides in the cytoplasm. Functionally, component of the ribosome, a large ribonucleoprotein complex responsible for the synthesis of proteins in the cell. The small ribosomal subunit (SSU) binds messenger RNAs (mRNAs) and translates the encoded message by selecting cognate aminoacyl-transfer RNA (tRNA) molecules. The large subunit (LSU) contains the ribosomal catalytic site termed the peptidyl transferase center (PTC), which catalyzes the formation of peptide bonds, thereby polymerizing the amino acids delivered by tRNAs into a polypeptide chain. The nascent polypeptides leave the ribosome through a tunnel in the LSU and interact with protein factors that function in enzymatic processing, targeting, and the membrane insertion of nascent chains at the exit of the ribosomal tunnel. This is Large ribosomal subunit protein uL13B (rpl1601) from Schizosaccharomyces pombe (strain 972 / ATCC 24843) (Fission yeast).